The primary structure comprises 700 residues: ATP-dependent zinc metalloprotease FtsH (700 aa).

Topologically, residues 1–10 (MNNNKGGFLR) are cytoplasmic. Residues 11–31 (SSVFYIFIFLAVVGMVYGLFG) form a helical membrane-spanning segment. Residues 32–130 (NDKTTTKTIT…LVTKQAENSG (99 aa)) are Extracellular-facing. Residues 131–151 (FWLNLLVSLVPVLLIVAVFYL) traverse the membrane as a helical segment. At 152 to 700 (MMNQAGGGKG…ETDDNNTENK (549 aa)) the chain is on the cytoplasmic side. 227–234 (GPPGTGKT) is a binding site for ATP. His-449 serves as a coordination point for Zn(2+). The active site involves Glu-450. 2 residues coordinate Zn(2+): His-453 and Asp-525. The disordered stretch occupies residues 644 to 700 (KSFEEAKAAADAKDSQAEQRFEKQDEEKSSDDHSESKNEDTDSTDKSETDDNNTENK).

It in the central section; belongs to the AAA ATPase family. The protein in the C-terminal section; belongs to the peptidase M41 family. As to quaternary structure, homohexamer. The cofactor is Zn(2+).

It localises to the cell membrane. Its function is as follows. Acts as a processive, ATP-dependent zinc metallopeptidase for both cytoplasmic and membrane proteins. Plays a role in the quality control of integral membrane proteins. This chain is ATP-dependent zinc metalloprotease FtsH, found in Leuconostoc mesenteroides subsp. mesenteroides (strain ATCC 8293 / DSM 20343 / BCRC 11652 / CCM 1803 / JCM 6124 / NCDO 523 / NBRC 100496 / NCIMB 8023 / NCTC 12954 / NRRL B-1118 / 37Y).